The following is a 197-amino-acid chain: MSDDTKKQDTAADAEVEKEMEGVPEHLRDDRGSEEDASDDLSAALESLKSDLEAAKQETLYAKAETQNVRRRMEKDIQDARTYAATGFARDILSIADNLARAIDAIPQELREDEKFKGLVAGIEATQRELDKVFAQHGVSRIAAMGLPLDPNQHQAMMEVPTDEVEPGTIVQEMQAGYMIRDRLLRPSMVGVAKKPD.

The segment covering 1-31 (MSDDTKKQDTAADAEVEKEMEGVPEHLRDDR) has biased composition (basic and acidic residues). The segment at 1–48 (MSDDTKKQDTAADAEVEKEMEGVPEHLRDDRGSEEDASDDLSAALESL) is disordered.

It belongs to the GrpE family. In terms of assembly, homodimer.

It is found in the cytoplasm. Participates actively in the response to hyperosmotic and heat shock by preventing the aggregation of stress-denatured proteins, in association with DnaK and GrpE. It is the nucleotide exchange factor for DnaK and may function as a thermosensor. Unfolded proteins bind initially to DnaJ; upon interaction with the DnaJ-bound protein, DnaK hydrolyzes its bound ATP, resulting in the formation of a stable complex. GrpE releases ADP from DnaK; ATP binding to DnaK triggers the release of the substrate protein, thus completing the reaction cycle. Several rounds of ATP-dependent interactions between DnaJ, DnaK and GrpE are required for fully efficient folding. The chain is Protein GrpE from Erythrobacter litoralis (strain HTCC2594).